The chain runs to 180 residues: MAAVNGYQGNTPADPPASNGSKQPAAPTKTVDSQSVLKRLQSELMGLMMGGGPGISAFPEEDNIFCWKGTITGSKDTVFEGTEYRLSLSFSNDYPFKPPKVKFETCCFHPNVDVYGNICLDILQDKWSSAYDVRTILLSIQSLLGEPNISSPLNTQAAQLWSNQEEYRKMVEKLYKPPSA.

The interval 1-33 (MAAVNGYQGNTPADPPASNGSKQPAAPTKTVDS) is disordered. The region spanning 35–180 (SVLKRLQSEL…VEKLYKPPSA (146 aa)) is the UBC core domain. Cysteine 119 (glycyl thioester intermediate) is an active-site residue.

It belongs to the ubiquitin-conjugating enzyme family. As to expression, expressed in all tissues with cell division activities and in mature leaves.

The enzyme catalyses S-ubiquitinyl-[E1 ubiquitin-activating enzyme]-L-cysteine + [E2 ubiquitin-conjugating enzyme]-L-cysteine = [E1 ubiquitin-activating enzyme]-L-cysteine + S-ubiquitinyl-[E2 ubiquitin-conjugating enzyme]-L-cysteine.. The protein operates within protein modification; protein ubiquitination. Its function is as follows. Accepts the ubiquitin from the E1 complex and catalyzes its covalent attachment to other proteins. The polypeptide is Ubiquitin-conjugating enzyme E2 20 (UBC20) (Arabidopsis thaliana (Mouse-ear cress)).